The sequence spans 66 residues: UPF0370 protein YpfN (66 aa).

A helical membrane pass occupies residues 4 to 24; that stretch reads LAKYWWILVLVFLVGVLLNVI. The tract at residues 39–66 is disordered; the sequence is KPELPPHRDFNDKWDDEDDWPKKDQPKK. Residues 42–51 show a composition bias toward basic and acidic residues; that stretch reads LPPHRDFNDK.

It belongs to the UPF0370 family.

The protein localises to the cell membrane. This chain is UPF0370 protein YpfN, found in Salmonella paratyphi C (strain RKS4594).